A 162-amino-acid chain; its full sequence is Protein A49 (162 aa).

The protein belongs to the poxviridae A49 protein family.

In Homo sapiens (Human), this protein is Protein A49.